Consider the following 275-residue polypeptide: Myb/SANT-like DNA-binding domain-containing protein 3 (275 aa).

The 66-residue stretch at 13–78 folds into the Myb-like domain; the sequence is FSELEKSILL…QLKKCWENIK (66 aa). A phosphoserine mark is found at serine 96 and serine 98. A Glycyl lysine isopeptide (Lys-Gly) (interchain with G-Cter in SUMO2) cross-link involves residue lysine 154. Positions 211–247 form a coiled coil; it reads QLIQMNEVHVAKIQQIERECEMAEEEHRIKMEVLNKK. Position 274 is a phosphoserine (serine 274).

Belongs to the MSANTD3 family. Expressed in brain.

This chain is Myb/SANT-like DNA-binding domain-containing protein 3 (MSANTD3), found in Homo sapiens (Human).